Here is a 416-residue protein sequence, read N- to C-terminus: Phakinin (416 aa).

Residues 1-48 (MSKRRVAADLPSGTNSSMPVQRHRVSSLRGTHSPSSLDSPPASRTSAV) are disordered. N-acetylserine is present on Ser-2. The tract at residues 2-115 (SKRRVAADLP…HTTVEDLGGC (114 aa)) is head. Phosphoserine occurs at positions 27, 33, 36, and 91. The span at 28–48 (LRGTHSPSSLDSPPASRTSAV) shows a compositional bias: polar residues. An IF rod domain is found at 105–416 (DHTTVEDLGG…HALLDREENN (312 aa)). Coiled-coil stretches lie at residues 116–146 (LVEY…SKAK), 170–249 (LENA…VKVL), and 308–402 (QTQE…LQKD). The segment at 397–416 (SQLQKDVASYHALLDREENN) is tail.

It belongs to the intermediate filament family. Part of a complex required for lens intermediate filament formation composed of BFSP1, BFSP2 and CRYAA. Found in a complex composed of PPL (via C-terminal linker domain), BFSP1 and BFSP2 in the retinal lens. Within the complex interacts with PPL (via C-terminal linker domain) and with BFSP1. Identified in a complex that contains VIM, EZR, AHNAK, BFSP1, BFSP2, ANK2, PLEC, PRX and spectrin. Interacts with LGSN. Interacts with VIM. Detected in retina lens fiber cells (at protein level). Also expressed in the lens epithelium, abundantly expressed in the anterior and anterolateral epithelium, less frequently expressed nearer the lens coronal equator (at protein level).

Its subcellular location is the cell membrane. The protein resides in the cytoplasm. It is found in the cytoskeleton. It localises to the cell cortex. Required for the correct formation of lens intermediate filaments as part of a complex composed of BFSP1, BFSP2 and CRYAA. Plays a role in maintenance of retinal lens optical clarity. This chain is Phakinin (Bfsp2), found in Mus musculus (Mouse).